The primary structure comprises 309 residues: MPGIAYLGPEGTFTEAALRALDAQGLIPATQSGAGSVTPLATDSTPAALAAVRAGDADFACVPIENSIDGPVIPTLDSLADGVPLQIYAELTLDVSFTIAVRPGVTAADVRTVAAFPVAAAQVKRWLSENLPNVELVPSNSNAAAARDVADGRAEAAVSTALATERYGLDTLAAGIVDEPNARTRFVLVGCPGPPPKRTGSDRTSVVLRLDNVPGALVTAMNELAIRGIDLTGIESRPTRTELGTYRFYLDFVGHIDDDAVAGALRALHRRCADVRYLGSWPTGETGGAAPPPLDEATAWLQRLREGRP.

In terms of domain architecture, Prephenate dehydratase spans 3 to 191 (GIAYLGPEGT…ARTRFVLVGC (189 aa)). One can recognise an ACT domain in the interval 205–282 (SVVLRLDNVP…ADVRYLGSWP (78 aa)).

As to quaternary structure, homodimer.

It catalyses the reaction prephenate + H(+) = 3-phenylpyruvate + CO2 + H2O. Its pathway is amino-acid biosynthesis; L-phenylalanine biosynthesis; phenylpyruvate from prephenate: step 1/1. This Mycolicibacterium gilvum (strain PYR-GCK) (Mycobacterium gilvum (strain PYR-GCK)) protein is Prephenate dehydratase (pheA).